The chain runs to 407 residues: Cell division protein FtsZ (407 aa).

GTP is bound by residues 18 to 22 (GGGVN), 105 to 107 (GTG), E136, R140, and D184. A disordered region spans residues 312–407 (FDGGQPPARR…EELDVPDFLK (96 aa)). Low complexity-rich tracts occupy residues 336–348 (AAPA…STRP) and 368–377 (APATASGESS). Pro residues predominate over residues 381–390 (VSPPHVPPAR). Over residues 396 to 407 (QAEELDVPDFLK) the composition is skewed to acidic residues.

Belongs to the FtsZ family. As to quaternary structure, homodimer. Polymerizes to form a dynamic ring structure in a strictly GTP-dependent manner. Interacts directly with several other division proteins.

The protein resides in the cytoplasm. In terms of biological role, essential cell division protein that forms a contractile ring structure (Z ring) at the future cell division site. The regulation of the ring assembly controls the timing and the location of cell division. One of the functions of the FtsZ ring is to recruit other cell division proteins to the septum to produce a new cell wall between the dividing cells. Binds GTP and shows GTPase activity. This Streptomyces griseus protein is Cell division protein FtsZ.